The following is a 410-amino-acid chain: Angiopoietin-related protein 4 (410 aa).

The first 23 residues, 1 to 23 (MRCAPTAGAALVLCAATAGLLSA), serve as a signal peptide directing secretion. The tract at residues 79 to 101 (ACQGPKGKDAPFKDSEDRVPEGQ) is disordered. The span at 84–98 (KGKDAPFKDSEDRVP) shows a compositional bias: basic and acidic residues. Residues 104 to 152 (ETLQSLQTQLKAQNSKIQQLFQKVAQQQRYLSKQNLRIQNLQSQIDLLA) adopt a coiled-coil conformation. N-linked (GlcNAc...) asparagine glycosylation occurs at Asn181. Positions 183–405 (THLHRPPRDC…ATTLLIQPME (223 aa)) constitute a Fibrinogen C-terminal domain. Cys192 and Cys220 are joined by a disulfide. 2 N-linked (GlcNAc...) asparagine glycosylation sites follow: Asn236 and Asn242. Cys345 and Cys358 are joined by a disulfide.

In terms of assembly, homooligomer; disulfide-linked via Cys residues in the N-terminal part of the protein. The homooligomer undergoes proteolytic processing to release the ANGPTL4 C-terminal chain, which circulates as a monomer. The homooligomer unprocessed form is able to interact with the extracellular matrix. N-glycosylated. In terms of processing, forms disulfide-linked dimers and tetramers. Post-translationally, cleaved into a smaller N-terminal chain and a larger chain that contains the fibrinogen C-terminal domain; both cleaved and uncleaved forms are detected in the extracellular space. The cleaved form is not present within the cell. As to expression, detected in liver and kidney. Predominantly expressed in adipose tissue and is strongly up-regulated by fasting in white adipose tissue and liver. More abundant in areas of lower flow stress in the inner curvature compared to the outer curvature regions of the aorta (at protein level).

The protein localises to the secreted. Its subcellular location is the extracellular space. It is found in the extracellular matrix. Mediates inactivation of the lipoprotein lipase LPL, and thereby plays a role in the regulation of triglyceride clearance from the blood serum and in lipid metabolism. May also play a role in regulating glucose homeostasis and insulin sensitivity. Inhibits proliferation, migration, and tubule formation of endothelial cells and reduces vascular leakage. Upon heterologous expression, inhibits the adhesion of endothelial cell to the extracellular matrix (ECM), and inhibits the reorganization of the actin cytoskeleton, formation of actin stress fibers and focal adhesions in endothelial cells that have adhered to ANGPTL4-containing ECM (in vitro). Depending on context, may modulate tumor-related angiogenesis. In terms of biological role, mediates inactivation of the lipoprotein lipase LPL, and thereby plays an important role in the regulation of triglyceride clearance from the blood serum and in lipid metabolism. Has higher activity in LPL inactivation than the uncleaved protein. This is Angiopoietin-related protein 4 (Angptl4) from Mus musculus (Mouse).